The primary structure comprises 436 residues: Phosphomethylpyrimidine synthase (436 aa).

Substrate-binding positions include Asn-68, Met-97, Tyr-126, His-166, 188 to 190 (SRG), 229 to 232 (DGFR), and Glu-268. His-272 lines the Zn(2+) pocket. Tyr-295 is a substrate binding site. His-336 contributes to the Zn(2+) binding site. Residues Cys-412, Cys-415, and Cys-419 each contribute to the [4Fe-4S] cluster site.

The protein belongs to the ThiC family. In terms of assembly, homodimer. Requires [4Fe-4S] cluster as cofactor.

It carries out the reaction 5-amino-1-(5-phospho-beta-D-ribosyl)imidazole + S-adenosyl-L-methionine = 4-amino-2-methyl-5-(phosphooxymethyl)pyrimidine + CO + 5'-deoxyadenosine + formate + L-methionine + 3 H(+). It functions in the pathway cofactor biosynthesis; thiamine diphosphate biosynthesis. Its function is as follows. Catalyzes the synthesis of the hydroxymethylpyrimidine phosphate (HMP-P) moiety of thiamine from aminoimidazole ribotide (AIR) in a radical S-adenosyl-L-methionine (SAM)-dependent reaction. This is Phosphomethylpyrimidine synthase from Geobacter metallireducens (strain ATCC 53774 / DSM 7210 / GS-15).